A 323-amino-acid polypeptide reads, in one-letter code: MKPENKIPVLTRLSDEMTAVVNFQQPGLPPWPADGDIETQRQYYLLERRFWNADAPSMTTRTCAVSTPYGDVTTRLYSPQPTSQATLYYLHGGGFILGNLDTHDRIMRLLARYTGCTVIGIDYSLSPQARYPQAIEETVAVCSYFSQHADEYSLNVEEIGFAGDSAGAMLALASALWLRDKHIRCGNVIAILLWYGLYGLQDSVSRRLFGGAWDGLTREDLDMYEKAYLRNDEDRESPWYCLFNNDLTRDVPPCFIASAEFDPLIDDSRLLHQTLQAHQQPCEYKMYPGTLHAFLHYSRMMTIADDALQDGARFFMARMKTPR.

The Involved in the stabilization of the negatively charged intermediate by the formation of the oxyanion hole motif lies at 91-93; sequence HGG. Catalysis depends on residues S165, D262, and H292.

This sequence belongs to the 'GDXG' lipolytic enzyme family. Homodimer. Interacts with MalT and MelA.

The protein localises to the cytoplasm. Its function is as follows. Displays esterase activity towards short chain fatty esters (acyl chain length of up to 8 carbons). Able to hydrolyze triacetylglycerol (triacetin) and tributyrylglycerol (tributyrin), but not trioleylglycerol (triolein) or cholesterol oleate. Negatively regulates MalT activity by antagonizing maltotriose binding. Inhibits MelA galactosidase activity. The sequence is that of Acetyl esterase from Salmonella typhi.